A 436-amino-acid polypeptide reads, in one-letter code: uncharacterized protein (436 aa).

This is an uncharacterized protein from Diadromus pulchellus (Parasitic wasp).